We begin with the raw amino-acid sequence, 128 residues long: 2-iminobutanoate/2-iminopropanoate deaminase (128 aa).

Position 105 (Arg-105) interacts with substrate.

It belongs to the RutC family. Homotrimer.

The protein localises to the cytoplasm. The catalysed reaction is 2-iminobutanoate + H2O = 2-oxobutanoate + NH4(+). The enzyme catalyses 2-iminopropanoate + H2O = pyruvate + NH4(+). The protein operates within amino-acid biosynthesis; L-isoleucine biosynthesis; 2-oxobutanoate from L-threonine. Accelerates the release of ammonia from reactive enamine/imine intermediates of the PLP-dependent threonine dehydratase (IlvA) in the low water environment of the cell. It catalyzes the deamination of enamine/imine intermediates to yield 2-ketobutyrate and ammonia. It is required for the detoxification of reactive intermediates of IlvA due to their highly nucleophilic abilities and to avoid they are captured by anthranilate phosphoribosyltransferase (TrpD) to generate PRA, an intermediate in the alternative pyrimidine biosynthetic (APB) pathway. Also required for full activity of IlvE which is involved in the isoleucine biosynthesis. RidA also accelerates the release of pyruvate produced by IlvA from L-serine. This Salmonella typhimurium (strain LT2 / SGSC1412 / ATCC 700720) protein is 2-iminobutanoate/2-iminopropanoate deaminase.